Here is a 459-residue protein sequence, read N- to C-terminus: MLKIFNTLTREKEIFKPIHANKVGMYVCGITVYDLCHVGHGRTFVCFDVIARYLRYLGYDLTYVRNITDVDDKIIKRALENNETCNQLVEKMIAEMHKDFDALNVLRPDVEPRATHHIPEIIAMIEKLIARQHAYVSANGDVMFDVESFKEYGKLSRQNLEQLQAGARVEIVNVKKNPMDFVLWKMSKPGEPSWPSPWGEGRPGWHIECSAMNHKELGEHFDIHGGGSDLTFPHHENEIAQSCCAHSGRYVNYWIHSGMIMVDREKMSKSLGNFFTLREVLSLYDAESVRYFLLTAHYRSQLNYSEENLNLAHSALERLYTALRGTDPTAVATEGQNYLAAFREAMDDDFNTPKAISVLFEIAREINKLKNEDILKANALAARLRELAGILGLLYQDPEQFLQSGSDNDEVALIEALIKQRNDARAAKDWASADAARNKLAEMGVVLEDNVNGTTWRKQ.

Cys-28 contacts Zn(2+). Positions 30 to 40 (ITVYDLCHVGH) match the 'HIGH' region motif. Residues Cys-209, His-234, and Glu-238 each coordinate Zn(2+). The 'KMSKS' region signature appears at 266-270 (KMSKS). Lys-269 lines the ATP pocket.

The protein belongs to the class-I aminoacyl-tRNA synthetase family. As to quaternary structure, monomer. Zn(2+) serves as cofactor.

It is found in the cytoplasm. The enzyme catalyses tRNA(Cys) + L-cysteine + ATP = L-cysteinyl-tRNA(Cys) + AMP + diphosphate. This Pasteurella multocida (strain Pm70) protein is Cysteine--tRNA ligase (cysS).